A 436-amino-acid chain; its full sequence is ATP-dependent protease ATPase subunit HslU (436 aa).

ATP contacts are provided by residues isoleucine 19, 61–66, aspartate 249, glutamate 314, and arginine 386; that span reads GVGKTE.

It belongs to the ClpX chaperone family. HslU subfamily. In terms of assembly, a double ring-shaped homohexamer of HslV is capped on each side by a ring-shaped HslU homohexamer. The assembly of the HslU/HslV complex is dependent on binding of ATP.

It localises to the cytoplasm. Its function is as follows. ATPase subunit of a proteasome-like degradation complex; this subunit has chaperone activity. The binding of ATP and its subsequent hydrolysis by HslU are essential for unfolding of protein substrates subsequently hydrolyzed by HslV. HslU recognizes the N-terminal part of its protein substrates and unfolds these before they are guided to HslV for hydrolysis. The polypeptide is ATP-dependent protease ATPase subunit HslU (Bartonella bacilliformis (strain ATCC 35685 / KC583 / Herrer 020/F12,63)).